Consider the following 142-residue polypeptide: Large ribosomal subunit protein uL13 (142 aa).

The protein belongs to the universal ribosomal protein uL13 family. In terms of assembly, part of the 50S ribosomal subunit.

This protein is one of the early assembly proteins of the 50S ribosomal subunit, although it is not seen to bind rRNA by itself. It is important during the early stages of 50S assembly. This is Large ribosomal subunit protein uL13 from Acidovorax sp. (strain JS42).